The primary structure comprises 97 residues: Co-chaperonin GroES (97 aa).

It belongs to the GroES chaperonin family. Heptamer of 7 subunits arranged in a ring. Interacts with the chaperonin GroEL.

It is found in the cytoplasm. Its function is as follows. Together with the chaperonin GroEL, plays an essential role in assisting protein folding. The GroEL-GroES system forms a nano-cage that allows encapsulation of the non-native substrate proteins and provides a physical environment optimized to promote and accelerate protein folding. GroES binds to the apical surface of the GroEL ring, thereby capping the opening of the GroEL channel. The polypeptide is Co-chaperonin GroES (Symbiobacterium thermophilum (strain DSM 24528 / JCM 14929 / IAM 14863 / T)).